A 333-amino-acid polypeptide reads, in one-letter code: 6-phosphogluconolactonase (333 aa).

The protein belongs to the cycloisomerase 2 family.

It catalyses the reaction 6-phospho-D-glucono-1,5-lactone + H2O = 6-phospho-D-gluconate + H(+). The protein operates within carbohydrate degradation; pentose phosphate pathway; D-ribulose 5-phosphate from D-glucose 6-phosphate (oxidative stage): step 2/3. Its function is as follows. Catalyzes the hydrolysis of 6-phosphogluconolactone to 6-phosphogluconate. The chain is 6-phosphogluconolactonase from Yersinia enterocolitica serotype O:8 / biotype 1B (strain NCTC 13174 / 8081).